The following is a 288-amino-acid chain: Structure-specific endonuclease subunit SLX1 (288 aa).

In terms of domain architecture, GIY-YIG spans 7 to 90 (PFYGVYLLQS…QHPNMTRLIT (84 aa)).

This sequence belongs to the SLX1 family. Forms a heterodimer with SLX4. It depends on a divalent metal cation as a cofactor.

The protein localises to the nucleus. Functionally, catalytic subunit of the SLX1-SLX4 structure-specific endonuclease that resolves DNA secondary structures generated during DNA repair and recombination. Has endonuclease activity towards branched DNA substrates, introducing single-strand cuts in duplex DNA close to junctions with ss-DNA. The protein is Structure-specific endonuclease subunit SLX1 of Yarrowia lipolytica (strain CLIB 122 / E 150) (Yeast).